Reading from the N-terminus, the 230-residue chain is NAD(P)H-hydrate epimerase (230 aa).

Residues 11-223 enclose the YjeF N-terminal domain; it reads YAAADIRAAE…DVGLDLSGAT (213 aa). 59–63 is a (6S)-NADPHX binding site; the sequence is NNGGD. N60 and D125 together coordinate K(+). (6S)-NADPHX contacts are provided by residues 129-137 and D165; that span reads GIGTTDSPA. S168 contributes to the K(+) binding site.

The protein belongs to the NnrE/AIBP family. Requires K(+) as cofactor.

The enzyme catalyses (6R)-NADHX = (6S)-NADHX. It carries out the reaction (6R)-NADPHX = (6S)-NADPHX. Functionally, catalyzes the epimerization of the S- and R-forms of NAD(P)HX, a damaged form of NAD(P)H that is a result of enzymatic or heat-dependent hydration. This is a prerequisite for the S-specific NAD(P)H-hydrate dehydratase to allow the repair of both epimers of NAD(P)HX. In Clavibacter michiganensis subsp. michiganensis (strain NCPPB 382), this protein is NAD(P)H-hydrate epimerase.